The sequence spans 858 residues: Protein translocase subunit SecA (858 aa).

ATP is bound by residues glutamine 85, 103–107, and aspartate 511; that span reads GEGKT. Zn(2+)-binding residues include cysteine 840, cysteine 842, cysteine 851, and cysteine 852.

The protein belongs to the SecA family. As to quaternary structure, monomer and homodimer. Part of the essential Sec protein translocation apparatus which comprises SecA, SecYEG and auxiliary proteins SecDF. Other proteins may also be involved. Requires Zn(2+) as cofactor.

The protein resides in the cell membrane. The protein localises to the cytoplasm. It catalyses the reaction ATP + H2O + cellular proteinSide 1 = ADP + phosphate + cellular proteinSide 2.. Functionally, part of the Sec protein translocase complex. Interacts with the SecYEG preprotein conducting channel. Has a central role in coupling the hydrolysis of ATP to the transfer of proteins into and across the cell membrane, serving as an ATP-driven molecular motor driving the stepwise translocation of polypeptide chains across the membrane. In Lachnoclostridium phytofermentans (strain ATCC 700394 / DSM 18823 / ISDg) (Clostridium phytofermentans), this protein is Protein translocase subunit SecA.